Reading from the N-terminus, the 185-residue chain is Ribosome-recycling factor (185 aa).

Belongs to the RRF family.

It is found in the cytoplasm. Its function is as follows. Responsible for the release of ribosomes from messenger RNA at the termination of protein biosynthesis. May increase the efficiency of translation by recycling ribosomes from one round of translation to another. The sequence is that of Ribosome-recycling factor from Sodalis glossinidius (strain morsitans).